The sequence spans 77 residues: Acyl carrier protein (77 aa).

The 76-residue stretch at 2 to 77 (ADVLERVTKI…DAVTYIESHL (76 aa)) folds into the Carrier domain. Ser-37 bears the O-(pantetheine 4'-phosphoryl)serine mark.

The protein belongs to the acyl carrier protein (ACP) family. Post-translationally, 4'-phosphopantetheine is transferred from CoA to a specific serine of apo-ACP by AcpS. This modification is essential for activity because fatty acids are bound in thioester linkage to the sulfhydryl of the prosthetic group.

It is found in the cytoplasm. Its pathway is lipid metabolism; fatty acid biosynthesis. Carrier of the growing fatty acid chain in fatty acid biosynthesis. This chain is Acyl carrier protein, found in Bacillus anthracis (strain A0248).